We begin with the raw amino-acid sequence, 459 residues long: Glutamyl-tRNA(Gln) amidotransferase subunit A, mitochondrial (459 aa).

Active-site charge relay system residues include Lys37 and Ser114. Ser138 functions as the Acyl-ester intermediate in the catalytic mechanism.

It belongs to the amidase family. GatA subfamily. In terms of assembly, subunit of the heterotrimeric GatFAB amidotransferase (AdT) complex, composed of A, B and F subunits.

Its subcellular location is the mitochondrion. The catalysed reaction is L-glutamyl-tRNA(Gln) + L-glutamine + ATP + H2O = L-glutaminyl-tRNA(Gln) + L-glutamate + ADP + phosphate + H(+). Allows the formation of correctly charged Gln-tRNA(Gln) through the transamidation of misacylated Glu-tRNA(Gln) in the mitochondria. The reaction takes place in the presence of glutamine and ATP through an activated gamma-phospho-Glu-tRNA(Gln). This Yarrowia lipolytica (strain CLIB 122 / E 150) (Yeast) protein is Glutamyl-tRNA(Gln) amidotransferase subunit A, mitochondrial.